The sequence spans 77 residues: Conotoxin Ar5.1 a (77 aa).

The signal sequence occupies residues 1 to 19 (MLCLPVFIILLLLASPAAS). Residues 20–44 (NPLETRIQSDLIRAALEDADMKNEK) constitute a propeptide that is removed on maturation.

Belongs to the conotoxin T superfamily. Post-translationally, contains 2 disulfide bonds that can be either 'C1-C3, C2-C4' or 'C1-C4, C2-C3', since these disulfide connectivities have been observed for conotoxins with cysteine framework V (for examples, see AC P0DQQ7 and AC P81755). Expressed by the venom duct.

The protein localises to the secreted. The sequence is that of Conotoxin Ar5.1 a from Conus arenatus (Sand-dusted cone).